Consider the following 248-residue polypeptide: Probable phosphatase VFMJ11_A0091 (248 aa).

Zn(2+) is bound by residues His8, His10, His16, His41, Glu74, His102, His132, Asp194, and His196.

Belongs to the PHP family. The cofactor is Zn(2+).

In Aliivibrio fischeri (strain MJ11) (Vibrio fischeri), this protein is Probable phosphatase VFMJ11_A0091.